Reading from the N-terminus, the 123-residue chain is uncharacterized protein (123 aa).

The first 25 residues, 1 to 25 (MKHGIKALLITLSLACAGMSHSALA), serve as a signal peptide directing secretion. Positions 40–53 (EAPAAQSKAAVPAK) are enriched in low complexity. Residues 40–62 (EAPAAQSKAAVPAKASDEEGTRV) form a disordered region. HhH domains lie at 60-90 (TRVSINNASAEELARAMNGVGLKKAQAIVSY) and 91-120 (REEYGPFKTVEDLKQVPGMGNSLVERNLAV).

This is an uncharacterized protein from Escherichia coli (strain K12).